The primary structure comprises 761 residues: Zinc finger protein 287 (761 aa).

An SCAN box domain is found at 49–131; it reads RQNFRNFPYP…TLVEDLTQIL (83 aa). Positions 134–154 are disordered; it reads EAPQNSTLSQDTPEEDPRGKH. The KRAB domain occupies 170–238; the sequence is MTFKDVAVDI…IKEILEGPSP (69 aa). C2H2-type zinc fingers lie at residues 368 to 390, 396 to 418, 424 to 446, 452 to 474, 480 to 502, 508 to 530, 536 to 558, 564 to 586, 592 to 614, 620 to 642, 648 to 670, 676 to 698, 704 to 726, and 732 to 754; these read YKCNVCGKKFRKYPSLLKHQSTH, YECEECGKEFRHISSLIAHQRMH, YECHQCGKAFSQRAHLTIHQRIH, YKCDDCGKDFSQRAHLTIHQRTH, YKCLECGKTFSHSSSLINHQRVH, YICNECGKTFSQSTHLLQHQKIH, YKCNECWKVFSQSTYLIRHQRIH, YKCNECGKAFAHSSTLIQHQTTH, YICNICGKAFSQSANLTQHHRTH, YKCSVCGKAFSQSVHLTQHQRIH, FKCNICGKAYRQGANLTQHQRIH, YKCNECGKAFIYSSSLNQHQRTH, YKCNECDKDFSQRTCLIQHQRIH, and YACRICGKTFTQSTNLIQHQRVH.

It belongs to the krueppel C2H2-type zinc-finger protein family.

The protein localises to the nucleus. May be involved in transcriptional regulation. The chain is Zinc finger protein 287 from Pongo pygmaeus (Bornean orangutan).